The chain runs to 541 residues: Cytochrome P450 monooxygenase claW (541 aa).

Residues 12–32 form a helical membrane-spanning segment; it reads VINALVILFSFWAFLSLIRVI. Cysteine 480 provides a ligand contact to heme.

It belongs to the cytochrome P450 family. Requires heme as cofactor.

It is found in the membrane. It participates in secondary metabolite biosynthesis; terpenoid biosynthesis. In terms of biological role, cytochrome P450 monooxygenase; part of the gene cluster that mediates the biosynthesis of clavilactone A, a meroterpenoid that features a unique benzo-fused ten-membered carbocyclic ring unit with an alpha,beta-epoxy-gamma-lactone moiety, forming an intriguing 10/5/3 tricyclic nested skeleton. Cytochrome P450 monooxygenases claO, claP, claQ, claU, and claW are close orthologs, suggesting that a redundant function or pseudogenes are present in the cla cluster. These monoxygenases are not involved in clavilactone A biosynthesis nor its modification. ClaR, ClaS and ClaT are sufficient to produce clavilactone A. The biosynthesis begins with the prenyltransferase claS that transfers geranyl pyrophosphate (GPP) to hydroquinone to produces geranylhydroquinone. The cytochrome P450 monooxygenase claR then catalyzes the diradical coupling reaction between the intramolecular hydroquinone and allyl moieties to form the benzo-fused ten-membered carbocyclic ring unit of wigantol. Finally the cytochrome P450 monooxygenase claT exquisitely and stereoselectively assembles the alpha,beta-epoxy-gamma-lactone moiety, producing clavilactone A via arnebinol A. The polypeptide is Cytochrome P450 monooxygenase claW (Ampulloclitocybe clavipes (Club foot)).